A 276-amino-acid polypeptide reads, in one-letter code: Rhomboid protease GlpG (276 aa).

6 helical membrane passes run 94–114, 142–162, 169–189, 192–212, 229–249, and 252–272; these read GPFT…QNLL, AFMH…WYLG, IGSG…GFVQ, FSGP…GYVW, LILF…GMAI, and GAHV…TLHG. Ser-201 serves as the catalytic Nucleophile. The active site involves His-254.

This sequence belongs to the peptidase S54 family.

Its subcellular location is the cell inner membrane. The catalysed reaction is Cleaves type-1 transmembrane domains using a catalytic dyad composed of serine and histidine that are contributed by different transmembrane domains.. Its function is as follows. Rhomboid-type serine protease that catalyzes intramembrane proteolysis. This is Rhomboid protease GlpG from Klebsiella pneumoniae subsp. pneumoniae (strain ATCC 700721 / MGH 78578).